Here is a 270-residue protein sequence, read N- to C-terminus: Phosphodiesterase YaeI (270 aa).

A divalent metal cation-binding residues include D56, H58, D88, N120, H209, and H211.

The protein belongs to the metallophosphoesterase superfamily. The cofactor is a divalent metal cation.

Shows phosphodiesterase activity, hydrolyzing phosphodiester bond in the artificial chromogenic substrate bis-p-nitrophenyl phosphate (bis-pNPP). The chain is Phosphodiesterase YaeI (yaeI) from Escherichia coli (strain K12).